The following is a 602-amino-acid chain: Elongation factor 4 (602 aa).

Residues 6 to 188 enclose the tr-type G domain; it reads DHIRNFSIVA…AIVNKLPAPK (183 aa). GTP-binding positions include 18-23 and 135-138; these read DHGKST and NKID.

The protein belongs to the TRAFAC class translation factor GTPase superfamily. Classic translation factor GTPase family. LepA subfamily.

It is found in the cell inner membrane. It carries out the reaction GTP + H2O = GDP + phosphate + H(+). Its function is as follows. Required for accurate and efficient protein synthesis under certain stress conditions. May act as a fidelity factor of the translation reaction, by catalyzing a one-codon backward translocation of tRNAs on improperly translocated ribosomes. Back-translocation proceeds from a post-translocation (POST) complex to a pre-translocation (PRE) complex, thus giving elongation factor G a second chance to translocate the tRNAs correctly. Binds to ribosomes in a GTP-dependent manner. This chain is Elongation factor 4, found in Brucella abortus (strain 2308).